We begin with the raw amino-acid sequence, 417 residues long: Adrenocortical dysplasia protein homolog (417 aa).

The short motif at 11–13 is the PWI element; it reads PWI. At serine 25 the chain carries Phosphoserine. The segment at 156-245 is interaction with POT1; sequence ESASSSAGLT…SSIDSSQKAQ (90 aa). 2 stretches are compositionally biased toward polar residues: residues 237-250 and 259-292; these read SIDS…NPAS and SGAS…TSPR. Residues 237–309 are disordered; that stretch reads SIDSSQKAQE…PCSSTPSSPL (73 aa). Over residues 296–309 the composition is skewed to low complexity; sequence PSSTPCSSTPSSPL. Serine 313 and serine 317 each carry phosphoserine. Lysine 348 is covalently cross-linked (Glycyl lysine isopeptide (Lys-Gly) (interchain with G-Cter in SUMO2)).

In terms of assembly, component of the shelterin complex (telosome) composed of TERF1, TERF2, TINF2, TERF2IP ACD and POT1. Forms heterodimers with POT1. Identified in a complex with POT1 and single-stranded telomeric DNA. Interacts with STN1 and TINF2.

The protein localises to the nucleus. Its subcellular location is the chromosome. It is found in the telomere. Its function is as follows. Component of the shelterin complex (telosome) that is involved in the regulation of telomere length and protection. Shelterin associates with arrays of double-stranded TTAGGG repeats added by telomerase and protects chromosome ends. Without its protective activity, telomeres are no longer hidden from the DNA damage surveillance and chromosome ends are inappropriately processed by DNA repair pathways. Promotes binding of POT1 to single-stranded telomeric DNA. Modulates the inhibitory effects of POT1 on telomere elongation. The ACD-POT1 heterodimer enhances telomere elongation by recruiting telomerase to telomeres and increasing its processivity. May play a role in organogenesis. This Rattus norvegicus (Rat) protein is Adrenocortical dysplasia protein homolog.